The chain runs to 83 residues: Mu-theraphotoxin-Hhn2i (83 aa).

A signal peptide spans 1–21 (MKASMFLALAGLVLLFVVGYA). A propeptide spanning residues 22–48 (SESEEKEFPRELLSKIFAVDDFKGEER) is cleaved from the precursor. 3 disulfide bridges follow: Cys-50/Cys-65, Cys-57/Cys-70, and Cys-64/Cys-77. Residue Leu-81 is modified to Leucine amide.

It belongs to the neurotoxin 10 (Hwtx-1) family. 15 (Hntx-3) subfamily. Monomer. Expressed by the venom gland.

The protein resides in the secreted. Lethal neurotoxin. Selectively blocks tetrodotoxin-sensitive voltage-gated sodium channels (Nav). Does not affect tetrodotoxin-resistant voltage-gated sodium channels or calcium channels. The sequence is that of Mu-theraphotoxin-Hhn2i from Cyriopagopus hainanus (Chinese bird spider).